A 316-amino-acid chain; its full sequence is Chorismate mutase 3, chloroplastic (316 aa).

The transit peptide at 1–47 (MEAKLLKPAFYNSPNLNLTNSSRLISRLSIWNDKSKVGLSSGSLFLR) directs the protein to the chloroplast. Arginine 62 contributes to the L-phenylalanine binding site. The Chorismate mutase domain maps to 62-316 (RVDESEYLKL…QIEYLLRRLD (255 aa)). L-tyrosine-binding positions include arginine 133 and 194 to 197 (NCGS). 194 to 197 (NCGS) contributes to the L-phenylalanine binding site.

In terms of assembly, homodimer. Expressed in roots, stems, cauline leaves, flowers and siliques, and at lower levels in rosette leaves.

The protein resides in the plastid. It localises to the chloroplast. The catalysed reaction is chorismate = prephenate. It functions in the pathway metabolic intermediate biosynthesis; prephenate biosynthesis; prephenate from chorismate: step 1/1. With respect to regulation, allosterically inhibited by tyrosine and phenylalanine. According to another report, seems not to be repressed by tyrosine and phenylalanine. Activated by tryptophan, cysteine and histidine. Functionally, may play a role in chloroplast biogenesis. The sequence is that of Chorismate mutase 3, chloroplastic from Arabidopsis thaliana (Mouse-ear cress).